A 398-amino-acid polypeptide reads, in one-letter code: 8-amino-7-oxononanoate synthase (398 aa).

Arg26 serves as a coordination point for substrate. Gly113 to Phe114 provides a ligand contact to pyridoxal 5'-phosphate. Residue His138 participates in substrate binding. Ser181, His209, and Thr238 together coordinate pyridoxal 5'-phosphate. Lys241 is modified (N6-(pyridoxal phosphate)lysine). Residue Thr355 participates in substrate binding.

This sequence belongs to the class-II pyridoxal-phosphate-dependent aminotransferase family. BioF subfamily. As to quaternary structure, homodimer. It depends on pyridoxal 5'-phosphate as a cofactor.

It catalyses the reaction 6-carboxyhexanoyl-[ACP] + L-alanine + H(+) = (8S)-8-amino-7-oxononanoate + holo-[ACP] + CO2. Its pathway is cofactor biosynthesis; biotin biosynthesis. Its function is as follows. Catalyzes the decarboxylative condensation of pimeloyl-[acyl-carrier protein] and L-alanine to produce 8-amino-7-oxononanoate (AON), [acyl-carrier protein], and carbon dioxide. The polypeptide is 8-amino-7-oxononanoate synthase (Aeromonas salmonicida (strain A449)).